The chain runs to 85 residues: Large ribosomal subunit protein bL27 (85 aa).

Residues 1–25 (MAHKKAGSSSKNGRDSNPQYLGVKR) are disordered. Over residues 7 to 19 (GSSSKNGRDSNPQ) the composition is skewed to polar residues.

Belongs to the bacterial ribosomal protein bL27 family.

The polypeptide is Large ribosomal subunit protein bL27 (Micrococcus luteus (strain ATCC 4698 / DSM 20030 / JCM 1464 / CCM 169 / CCUG 5858 / IAM 1056 / NBRC 3333 / NCIMB 9278 / NCTC 2665 / VKM Ac-2230) (Micrococcus lysodeikticus)).